The following is a 1364-amino-acid chain: MSTAMAMAAAASSSAAAATATTTAISNSTNTTASPATTNTINTTTKTITTSEVPLEPASNMAPKALEIEDSGRNEPEDLEHGAAKPLEQRKTTVVHTCPRPPGGYKYSMEFLYGIGSGMAGIPLNIPTPSSITPRTVRSTAPLLTTHMPLLTNMGVAPSRPSGIRYPGSAGGSNGTTVAASTTPSTTVTTSSGSPGSGAEAITSSVSSSGLPAAGLQAAQFICQGYMPTGPQRRLWHAENAVWQFDRNYPYNQAYSPPYGIPMMPVGFEHPYGQRIIYPGYYNQTPPGINPAAVAGLTRTNRPVTQQPHILTQPAVGTTESSEEAPATLGNAPQVSSTWRYGRPGTHRGRHAVPTAAAPALLHRDSKSFYNSIGSGMANGPRFKAPFVANVRNFQAGAVATVAAGGAATTAVVGTSAPATGAASSSDQNVATKRNHQGAATQNNHRNRHNAKKGGKNSVGKELTSNSSESLSNSSSKSQLNKRPSSSSSISPIKHPHRNYRNRMRYTATEPTEQKAATTTVPISNYQPPQQSTSTVRRTSKFQGSNAYQAHTAAGRQQSRFYQSRHMDGYVFQSGHYMVYAAGAPPVGLRPGKSPVSEATGAPPGAAAATAAAATAVAATAAAAEGGGAAEGGGAAAAPVTASSATLEGEQPLDSDFDQRQEFADLGLDPANGGFSSDLEPNGIKQDTSELDTHSCLISHPNSEVDGDDNQSLASFAPSVESDDSDSELSDASVESVARDILVSCLAVATGAEEPDFSGPNLVPYGDMHYLKELDKKNPPTNGYRSHRPYHQSHYAYHSQMSPRGLSCCGDMLNQHSEDLVFKLDQNQPDGIESGKNIFLREITEQPDNISVASNLSCSPSASSSKSVLAPMASKSNITMPEENNDDDELPLVVHNRYWREFFGYTPADRFLLRAKFVEMRRPPKVMGCKNKWDPLSLSVWKKFLESQQTRHVYKIKMRLWRAIYTVAMKNYPRYGLYLVGSSISYFGSKCSDMDICMLACTNPNIDSRMEAVYHLHVMKELLGRTNMFQDFNLIEARVPILRFTDRCHKVEVDINFNNSVGIRNTHLLYCYSQLDWRVRPMALTVKQWAQYHNINNAKNMTISSYSLMLMVIHFLQVGASPPVLPCLHNLYPEKFGLLQPNDFGYVDMNEVMAPYQSDNSQTLGDLLLSFLHYYSVFDYGKYAISIRVGGVLPIEVCRAATAPKNDIHQWNELCIEEPFDQTNTARSVYDTDTFERIKTIFVASYRRLDSTRNLSAIFEDYDGPTILMQQPSVDSEIELYEGQHHRLLPNRGSSRSNSAIPSPRPSILMVDKATTAIWDDINNKPDHPVLSHSNNYDATNECTGNGSLMGLKDNSVADKPPIA.

The segment covering 27-51 (NSTNTTASPATTNTINTTTKTITTS) has biased composition (low complexity). Disordered stretches follow at residues 27-97 (NSTN…VVHT), 159-203 (SRPS…EAIT), 315-338 (AVGTTESSEEAPATLGNAPQVSST), 417-535 (APAT…STST), and 666-732 (LGLD…LSDA). Residues 66 to 91 (LEIEDSGRNEPEDLEHGAAKPLEQRK) are compositionally biased toward basic and acidic residues. The span at 175-198 (GTTVAASTTPSTTVTTSSGSPGSG) shows a compositional bias: low complexity. Positions 417–426 (APATGAASSS) are enriched in low complexity. The span at 427 to 444 (DQNVATKRNHQGAATQNN) shows a compositional bias: polar residues. A compositionally biased stretch (basic residues) spans 445 to 455 (HRNRHNAKKGG). A compositionally biased stretch (low complexity) spans 461–493 (KELTSNSSESLSNSSSKSQLNKRPSSSSSISPI). Positions 494-504 (KHPHRNYRNRM) are enriched in basic residues. The span at 509–535 (TEPTEQKAATTTVPISNYQPPQQSTST) shows a compositional bias: polar residues. The Mg(2+) site is built by D993 and D995. One can recognise a PAP-associated domain in the interval 1163 to 1224 (TLGDLLLSFL…CIEEPFDQTN (62 aa)).

Belongs to the DNA polymerase type-B-like family. GLD2 subfamily. In terms of assembly, interacts with Fmr1 and eIF-4E. The cofactor is Mg(2+). Mn(2+) serves as cofactor. In terms of tissue distribution, expressed in the brain.

Its subcellular location is the cytoplasm. The protein resides in the nucleus. It catalyses the reaction RNA(n) + ATP = RNA(n)-3'-adenine ribonucleotide + diphosphate. In terms of biological role, cytoplasmic poly(A) RNA polymerase that adds successive AMP monomers to the 3'-end of specific RNAs, forming a poly(A) tail. In contrast to the canonical nuclear poly(A) RNA polymerase, it only adds poly(A) to selected cytoplasmic mRNAs. Required for formation of long term memory. The protein is Poly(A) RNA polymerase gld-2 homolog A (Gld2) of Drosophila melanogaster (Fruit fly).